The chain runs to 462 residues: Acetate--CoA ligase [ADP-forming] I subunit alpha (462 aa).

Belongs to the acetate CoA ligase alpha subunit family. Heterotetramer of two alpha and two beta subunits.

It is found in the cytoplasm. The catalysed reaction is acetate + ATP + CoA = acetyl-CoA + ADP + phosphate. With respect to regulation, activity is dependent on magnesium. In terms of biological role, catalyzes the reversible formation of acetate and ATP from acetyl-CoA by using ADP and phosphate. Can use other substrates such as isobutyryl-CoA, propionyl-CoA and butyryl-CoA, but not indoleacetyl-CoA, phenylacetyl-CoA or succinyl-CoA. Seems to be involved primarily in the conversion of acetyl-CoA to acetate. Participates in the degradation of branched-chain amino acids via branched-chain-acyl-CoA esters. The sequence is that of Acetate--CoA ligase [ADP-forming] I subunit alpha from Pyrococcus furiosus (strain ATCC 43587 / DSM 3638 / JCM 8422 / Vc1).